The following is a 96-amino-acid chain: UPF0235 protein YggU (96 aa).

It belongs to the UPF0235 family.

In Salmonella arizonae (strain ATCC BAA-731 / CDC346-86 / RSK2980), this protein is UPF0235 protein YggU.